The sequence spans 1475 residues: Nuclear pore complex protein Nup153 (1475 aa).

Gly residues predominate over residues 1-15; that stretch reads MASGAGGVGGGGGGK. Disordered regions lie at residues 1 to 37, 90 to 124, and 171 to 225; these read MASG…QQHQ, DEES…NYPD, and DSTS…TATS. Ala2 carries the N-acetylalanine modification. At Thr102 the chain carries Phosphothreonine. Composition is skewed to polar residues over residues 107–121 and 181–190; these read VSNT…TASN and ISTTSGFSSR. Residues Ser182, Ser185, Ser192, Ser203, and Ser209 each carry the phosphoserine modification. Repeat 1 spans residues 236–237; it reads FG. Residues 236 to 1418 form a 29 X 2 AA repeats of F-G region; it reads FGTLSPSLGN…NSPSGVFTFG (1183 aa). Phosphoserine is present on residues Ser240, Ser257, Ser297, Ser320, Ser330, Ser333, Ser334, Ser338, and Ser343. Lys353 participates in a covalent cross-link: Glycyl lysine isopeptide (Lys-Gly) (interchain with G-Cter in SUMO2). Thr369 bears the Phosphothreonine mark. The residue at position 384 (Lys384) is an N6-acetyllysine. Thr388 is subject to Phosphothreonine. Phosphoserine is present on residues Ser500, Ser516, Ser518, Ser522, and Ser529. O-linked (GlcNAc) serine glycosylation is found at Ser534 and Ser544. The residue at position 588 (Thr588) is a Phosphothreonine. Phosphoserine is present on residues Ser607, Ser614, Ser619, and Ser633. Copy 2 of the repeat occupies 652 to 653; sequence FG. Residues 657-687 form a RanBP2-type 1 zinc finger; it reads KAGSSWQCDTCLLQNKVTDNKCIACQAAKLS. Zn(2+) contacts are provided by Cys664, Cys667, Cys678, and Cys681. Residue Ser687 is modified to Phosphoserine. Copy 3 of the repeat occupies 715–716; sequence FG. At Lys718 the chain carries N6-acetyllysine. The segment at 722 to 751 adopts a RanBP2-type 2 zinc-finger fold; sequence VIGTWDCDTCLVQNKPEAIKCVACETPKPG. The Zn(2+) site is built by Cys728, Cys731, Cys742, and Cys745. The stretch at 786-787 is repeat 4; the sequence is FG. RanBP2-type zinc fingers lie at residues 793–822 and 851–880; these read PIGS…EKPG and PEGS…AKPG. 8 residues coordinate Zn(2+): Cys799, Cys802, Cys813, Cys816, Cys857, Cys860, Cys871, and Cys874. At Ser891 the chain carries Phosphoserine. Residues 905–906 form repeat 5; it reads FG. O-linked (GlcNAc) serine glycosylation is found at Ser908 and Ser909. Residues 926–927 form repeat 6; sequence FG. An N6-acetyllysine modification is found at Lys954. Tandem repeats lie at residues 961-962, 983-984, 1000-1001, 1024-1025, and 1084-1085. A glycan (O-linked (GlcNAc) serine) is linked at Ser1113. Tandem repeats lie at residues 1118 to 1119 and 1135 to 1136. A disordered region spans residues 1128–1167; the sequence is KCQPVFSFGNSEQTKDENSSKSTFSFSMTKPSEKESEQPA. Residues 1147–1157 are compositionally biased toward low complexity; sequence SKSTFSFSMTK. Thr1156 carries O-linked (GlcNAc) threonine glycosylation. Repeat copies occupy residues 1173-1174, 1212-1213, 1228-1229, 1240-1241, 1275-1276, 1289-1290, 1291-1292, 1306-1307, 1319-1320, 1327-1328, and 1341-1342. A disordered region spans residues 1311–1402; that stretch reads SAPSASPAFG…SAFQFGSSTT (92 aa). Polar residues predominate over residues 1321–1335; it reads ANQTPTFGQSQGASQ. Composition is skewed to polar residues over residues 1343 to 1356 and 1363 to 1396; these read SISS…TGSQ and GTVS…SAFQ. Residues 1350–1475 form a (Microbial infection) Interacts with HIV-1 capsid protein p24 (CA) region; the sequence is LFPTGSQPAP…KIKTAVRRRK (126 aa). 5 tandem repeats follow at residues 1362 to 1363, 1374 to 1375, 1383 to 1384, 1397 to 1398, and 1417 to 1418. 2 stretches are compositionally biased toward polar residues: residues 1420-1431 and 1438-1463; these read NSSTPAASAQPS and FNQS…TSFS. The interval 1420–1475 is disordered; sequence NSSTPAASAQPSGSGGFPFNQSPAAFTVGSNGKNVFSSSGTSFSGRKIKTAVRRRK. 3 positions are modified to phosphoserine: Ser1457, Ser1461, and Ser1463. A compositionally biased stretch (basic residues) spans 1465–1475; sequence RKIKTAVRRRK.

It belongs to the NUP153 family. In terms of assembly, part of the nuclear pore complex (NPC). Interacts with TPR (via coiled coil region); the interaction is direct and provides a link between the core structure and the TPR-containing nuclear basket of the nuclear pore complex (NPC). Interacts with HIKESHI. Interacts with SENP2. Interacts with XPO5. Interacts with RAN; the interaction occurs in a GTP- and GDP-independent manner. Interacts with MCM3AP isoform GANP; this interaction is required for GANP localization at the nuclear pore complex. Interacts with MAPK1. (Microbial infection) Interacts (via C-terminus) with HIV-1 capsid protein p24 (CA) (via N-terminus). As to quaternary structure, (Microbial infection) Interacts with HIV-1 integrase; this interaction might play a role in nuclear import of HIV pre-integration complex. In terms of assembly, (Microbial infection) Interacts with hepatitis B virus capsid protein; this interaction probably plays a role in nuclear import of HBV genome. (Microbial infection) Interacts with Epstein-barr virus BGLF4; this interaction allows BGLF4 nuclear entry. As to quaternary structure, (Microbial infection) Interacts with HIV-2 virus protein vpx; this interaction might promote vpx nuclear entry. Zn(2+) serves as cofactor. In terms of processing, phosphorylated in interphase, hyperphosphorylated during mitosis. May play a role in the reversible disassembly of the nuclear pore complex during mitosis. Proteolytically degraded after poliovirus (PV) infection; degradation is partial and NCP- and TPR-binding domains withstand degradation. Post-translationally, O-glycosylated during cytokinesis at sites identical or close to phosphorylation sites, this interferes with the phosphorylation status.

Its subcellular location is the nucleus. The protein localises to the nucleus membrane. The protein resides in the nuclear pore complex. Component of the nuclear pore complex (NPC), a complex required for the trafficking across the nuclear envelope. Functions as a scaffolding element in the nuclear phase of the NPC essential for normal nucleocytoplasmic transport of proteins and mRNAs. Involved in the quality control and retention of unspliced mRNAs in the nucleus; in association with TPR, regulates the nuclear export of unspliced mRNA species bearing constitutive transport element (CTE) in a NXF1- and KHDRBS1-independent manner. Mediates TPR anchoring to the nuclear membrane at NPC. The repeat-containing domain may be involved in anchoring other components of the NPC to the pore membrane. Possible DNA-binding subunit of the nuclear pore complex (NPC). Functionally, (Microbial infection) Interacts with HIV-1 caspid protein P24 and thereby promotes the integration of the virus in the nucleus of non-dividing cells (in vitro). Its function is as follows. (Microbial infection) Binds HIV-2 protein vpx and thereby promotes the nuclear translocation of the lentiviral genome (in vitro). This is Nuclear pore complex protein Nup153 (NUP153) from Homo sapiens (Human).